The primary structure comprises 154 residues: Jupiter microtubule associated homolog 1 (154 aa).

Position 1 is an N-acetylmethionine (Met-1). Residues Met-1 to Arg-19 are compositionally biased toward polar residues. The tract at residues Met-1 to Gly-154 is disordered. Thr-2 carries the post-translational modification N-acetylthreonine; in Hematological and neurological expressed 1 protein, N-terminally processed. Phosphoserine occurs at positions 28 and 31. A Phosphothreonine modification is found at Thr-54. Phosphoserine occurs at positions 71, 87, 88, and 92. Positions Ser-79 to Ser-91 are enriched in polar residues. The segment covering Leu-96–Val-108 has biased composition (basic and acidic residues). Residues Pro-125–Val-138 show a composition bias toward pro residues. Ser-131 bears the Phosphoserine mark. Lys-148 is modified (N6-acetyllysine).

This sequence belongs to the JUPITER family. Interacts with the complex composed, at least, of APC, CTNNB1 and GSK3B; the interaction takes place with the inactive form of GSK3B (phosphorylated at 'Ser-9'). In terms of tissue distribution, expressed in yolk sac, fetal brain, brain, spleen and bone marrow.

The protein resides in the nucleus. It is found in the cytoplasm. In terms of biological role, modulates negatively AKT-mediated GSK3B signaling. Induces CTNNB1 'Ser-33' phosphorylation and degradation through the suppression of the inhibitory 'Ser-9' phosphorylation of GSK3B, which represses the function of the APC:CTNNB1:GSK3B complex and the interaction with CDH1/E-cadherin in adherent junctions. Plays a role in the regulation of cell cycle and cell adhesion. Has an inhibitory role on AR-signaling pathway through the induction of receptor proteasomal degradation. The sequence is that of Jupiter microtubule associated homolog 1 from Mus musculus (Mouse).